Reading from the N-terminus, the 106-residue chain is Evasin P1168 (106 aa).

An N-terminal signal peptide occupies residues 1 to 24; the sequence is MEVKISTFLQIAVLIVLGIHLIAA. Disulfide bonds link cysteine 45–cysteine 67, cysteine 49–cysteine 69, and cysteine 60–cysteine 80. N-linked (GlcNAc...) asparagine glycosylation is found at asparagine 48, asparagine 54, and asparagine 64.

It localises to the secreted. Salivary chemokine-binding protein which binds to host chemokines CXCL1, CXCL2 and CXCL8. This is Evasin P1168 from Ixodes ricinus (Common tick).